Reading from the N-terminus, the 215-residue chain is Probable nicotinate-nucleotide adenylyltransferase (215 aa).

The protein belongs to the NadD family.

The catalysed reaction is nicotinate beta-D-ribonucleotide + ATP + H(+) = deamido-NAD(+) + diphosphate. It participates in cofactor biosynthesis; NAD(+) biosynthesis; deamido-NAD(+) from nicotinate D-ribonucleotide: step 1/1. In terms of biological role, catalyzes the reversible adenylation of nicotinate mononucleotide (NaMN) to nicotinic acid adenine dinucleotide (NaAD). The sequence is that of Probable nicotinate-nucleotide adenylyltransferase from Coxiella burnetii (strain Dugway 5J108-111).